The sequence spans 39 residues: Contryphan-Cal3 (39 aa).

An N-terminal signal peptide occupies residues 1–20; it reads MTRTAVLLLTLLFLVAMAAS. The cysteines at positions 29 and 35 are disulfide-linked.

As to expression, expressed by the venom duct.

It localises to the secreted. In terms of biological role, probable neurotoxin. The chain is Contryphan-Cal3 from Californiconus californicus (California cone).